The sequence spans 310 residues: p-hydroxybenzoic acid efflux pump subunit AaeA (310 aa).

The chain crosses the membrane as a helical span at residues 12–32 (AITVVLVILAFIAIFNAWVYY).

The protein belongs to the membrane fusion protein (MFP) (TC 8.A.1) family.

The protein resides in the cell inner membrane. Functionally, forms an efflux pump with AaeB. This Escherichia coli O8 (strain IAI1) protein is p-hydroxybenzoic acid efflux pump subunit AaeA.